A 150-amino-acid chain; its full sequence is Macrodomain Ter protein (150 aa).

It belongs to the MatP family. As to quaternary structure, homodimer.

Its subcellular location is the cytoplasm. Required for spatial organization of the terminus region of the chromosome (Ter macrodomain) during the cell cycle. Prevents early segregation of duplicated Ter macrodomains during cell division. Binds specifically to matS, which is a 13 bp signature motif repeated within the Ter macrodomain. This chain is Macrodomain Ter protein, found in Salmonella arizonae (strain ATCC BAA-731 / CDC346-86 / RSK2980).